The primary structure comprises 684 residues: Acetophenone carboxylase delta subunit (684 aa).

This sequence belongs to the oxoprolinase family. As to quaternary structure, acetophenone carboxylase consists of five subunits; a heterooctameric subcomplex of two alpha (Apc1), two beta (Apc2), two gamma (Apc3) and two delta (Apc4) subunits assembles with the epsilon (Apc5) subunit in an unknown stoichiometry. The cofactor is Mg(2+). Requires Mn(2+) as cofactor.

It localises to the cytoplasm. The enzyme catalyses acetophenone + hydrogencarbonate + 2 ATP + H2O = 3-oxo-3-phenylpropanoate + 2 ADP + 2 phosphate + 2 H(+). Its activity is regulated as follows. Inhibited by zinc ions, carbamoylphosphate and beta,gamma-imido-ATP. Its function is as follows. Catalyzes the carboxylation of acetophenone to form 3-oxo-3-phenylpropanoate (benzoylacetate) in the anaerobic catabolism of ethylbenzene. Also carboxylates propiophenone at the same rate and 4-acetyl-pyridine at lower rates. This is Acetophenone carboxylase delta subunit (apc4) from Aromatoleum aromaticum (strain DSM 19018 / LMG 30748 / EbN1) (Azoarcus sp. (strain EbN1)).